A 315-amino-acid polypeptide reads, in one-letter code: Zinc metalloproteinase nas-4 (315 aa).

Positions 1–20 are cleaved as a signal peptide; sequence MMTIQRYSLVFCAIFATCWT. An N-linked (GlcNAc...) asparagine glycan is attached at Asn71. The Peptidase M12A domain maps to 95-290; that stretch reads NAIKQIYRRW…RKINKLYNCP (196 aa). Disulfide bonds link Cys137/Cys289 and Cys160/Cys179. Residue His187 participates in Zn(2+) binding. Glu188 is an active-site residue. Zn(2+) contacts are provided by His191 and His197. The interval 291–315 is disordered; that stretch reads GVSGNNNNNNNNQINSNSIVNHPQV.

Requires Zn(2+) as cofactor. Digestive tract. Found in the pharynx cells of the procorpus, metacorpus, isthmus and terminal bulb, and in the terminal bulb lumen.

The protein localises to the secreted. Metalloprotease. May be involved in digestion. This is Zinc metalloproteinase nas-4 (nas-4) from Caenorhabditis elegans.